The following is a 299-amino-acid chain: DNA-binding transcriptional repressor CapW (299 aa).

The interval 1 to 84 (MESSGSSKVR…EFKPITKRSE (84 aa)) is winged HTH domain. The WYL domain stretch occupies residues 85 to 196 (ATRYLNELQR…IGRLDVLEHV (112 aa)). The WYL domain occupies 120–200 (SRAIEADEVA…DVLEHVFSAK (81 aa)). Residues 145 to 189 (YQSMDAPEPQEWVLSPHALGFDGLRWHARAWCHARQVFRDFAIGR) form a probable ligand-binding region region. A WCX domain region spans residues 197–299 (FSAKPVDPLL…DRDGLQHLRR (103 aa)).

In terms of assembly, homodimer.

Its function is as follows. Transcriptional regulator of a CBASS antivirus system. CBASS (cyclic oligonucleotide-based antiphage signaling system) provides immunity against bacteriophage. The CD-NTase protein synthesizes cyclic nucleotides in response to infection; these serve as specific second messenger signals. The signals activate a diverse range of effectors, leading to bacterial cell death and thus abortive phage infection. A type III CBASS system, part of a CapW-Cap6-Cap8-Cap7-CdnC-NucC locus. Binds specifically to palindromes that overlap the -10 site in the promoter of cap6, found beween found between the genes for divergently transcribed capW and cap6 (cognate DNA). Probably represses transcription bidirectionally from the promoter. Mutations that make it a constitutive repressor in E.coli do not change DNA-binding affinity. The sequence is that of DNA-binding transcriptional repressor CapW from Stenotrophomonas maltophilia (Pseudomonas maltophilia).